A 129-amino-acid chain; its full sequence is Small ribosomal subunit protein uS11 (129 aa).

It belongs to the universal ribosomal protein uS11 family. As to quaternary structure, part of the 30S ribosomal subunit. Interacts with proteins S7 and S18. Binds to IF-3.

Its function is as follows. Located on the platform of the 30S subunit, it bridges several disparate RNA helices of the 16S rRNA. Forms part of the Shine-Dalgarno cleft in the 70S ribosome. This chain is Small ribosomal subunit protein uS11, found in Ectopseudomonas mendocina (strain ymp) (Pseudomonas mendocina).